A 211-amino-acid chain; its full sequence is Large ribosomal subunit protein eL13 (211 aa).

This sequence belongs to the eukaryotic ribosomal protein eL13 family. In terms of assembly, component of the 60S large ribosomal subunit (LSU).

Its subcellular location is the cytoplasm. Its function is as follows. Component of the ribosome, a large ribonucleoprotein complex responsible for the synthesis of proteins in the cell. The small ribosomal subunit (SSU) binds messenger RNAs (mRNAs) and translates the encoded message by selecting cognate aminoacyl-transfer RNA (tRNA) molecules. The large subunit (LSU) contains the ribosomal catalytic site termed the peptidyl transferase center (PTC), which catalyzes the formation of peptide bonds, thereby polymerizing the amino acids delivered by tRNAs into a polypeptide chain. The nascent polypeptides leave the ribosome through a tunnel in the LSU and interact with protein factors that function in enzymatic processing, targeting, and the membrane insertion of nascent chains at the exit of the ribosomal tunnel. As part of the LSU, it is probably required for its formation and the maturation of rRNAs. The sequence is that of Large ribosomal subunit protein eL13 (RPL13) from Gallus gallus (Chicken).